Consider the following 388-residue polypeptide: Phosphopentomutase (388 aa).

Residues Asp11, Asp283, His288, Asp324, His325, and His336 each coordinate Mn(2+).

The protein belongs to the phosphopentomutase family. It depends on Mn(2+) as a cofactor.

It localises to the cytoplasm. It carries out the reaction 2-deoxy-alpha-D-ribose 1-phosphate = 2-deoxy-D-ribose 5-phosphate. The catalysed reaction is alpha-D-ribose 1-phosphate = D-ribose 5-phosphate. It participates in carbohydrate degradation; 2-deoxy-D-ribose 1-phosphate degradation; D-glyceraldehyde 3-phosphate and acetaldehyde from 2-deoxy-alpha-D-ribose 1-phosphate: step 1/2. Isomerase that catalyzes the conversion of deoxy-ribose 1-phosphate (dRib-1-P) and ribose 1-phosphate (Rib-1-P) to deoxy-ribose 5-phosphate (dRib-5-P) and ribose 5-phosphate (Rib-5-P), respectively. In Enterococcus faecalis (strain ATCC 700802 / V583), this protein is Phosphopentomutase.